The following is a 377-amino-acid chain: Phosphatidylserine decarboxylase proenzyme, mitochondrial (377 aa).

A mitochondrion-targeting transit peptide spans 1–34; sequence MMPLFNVLRSARMLPAVSKKVVSPPMMLRSVREL. Over 35-61 the chain is Mitochondrial matrix; that stretch reads TNQSKNVYATKEVIIGASQKKKRSWVK. The helical transmembrane segment at 62–80 threads the bilayer; it reads WLSVSTLIIGGASYVGYLF. The Mitochondrial intermembrane portion of the chain corresponds to 81 to 377; it reads TPDWREIVDS…YGQSLVADGV (297 aa). Catalysis depends on charge relay system; for autoendoproteolytic cleavage activity residues D181, H238, and S344. Catalysis depends on S344, which acts as the Schiff-base intermediate with substrate; via pyruvic acid; for decarboxylase activity. S344 is subject to Pyruvic acid (Ser); by autocatalysis.

The protein belongs to the phosphatidylserine decarboxylase family. PSD-B subfamily. Eukaryotic type I sub-subfamily. Heterodimer of a large membrane-associated beta subunit and a small pyruvoyl-containing alpha subunit. Requires pyruvate as cofactor. Is synthesized initially as an inactive proenzyme. Formation of the active enzyme involves a self-maturation process in which the active site pyruvoyl group is generated from an internal serine residue via an autocatalytic post-translational modification. Two non-identical subunits are generated from the proenzyme in this reaction, and the pyruvate is formed at the N-terminus of the alpha chain, which is derived from the carboxyl end of the proenzyme. The autoendoproteolytic cleavage occurs by a canonical serine protease mechanism, in which the side chain hydroxyl group of the serine supplies its oxygen atom to form the C-terminus of the beta chain, while the remainder of the serine residue undergoes an oxidative deamination to produce ammonia and the pyruvoyl prosthetic group on the alpha chain. During this reaction, the Ser that is part of the protease active site of the proenzyme becomes the pyruvoyl prosthetic group, which constitutes an essential element of the active site of the mature decarboxylase.

The protein localises to the mitochondrion inner membrane. The enzyme catalyses a 1,2-diacyl-sn-glycero-3-phospho-L-serine + H(+) = a 1,2-diacyl-sn-glycero-3-phosphoethanolamine + CO2. The protein operates within phospholipid metabolism; phosphatidylethanolamine biosynthesis; phosphatidylethanolamine from CDP-diacylglycerol: step 2/2. In terms of biological role, catalyzes the formation of phosphatidylethanolamine (PtdEtn) from phosphatidylserine (PtdSer). Plays a central role in phospholipid metabolism and in the interorganelle trafficking of phosphatidylserine. The polypeptide is Phosphatidylserine decarboxylase proenzyme, mitochondrial (Caenorhabditis elegans).